A 401-amino-acid chain; its full sequence is UPF0283 membrane protein SO_1811 (401 aa).

A disordered region spans residues 1–22; that stretch reads MSVELLPHSTEPHANGADKSVS. Helical transmembrane passes span 99 to 119, 129 to 149, and 239 to 259; these read LARL…VLGL, LFSF…VGVI, and ESAV…IILW.

Belongs to the UPF0283 family.

The protein localises to the cell inner membrane. This is UPF0283 membrane protein SO_1811 from Shewanella oneidensis (strain ATCC 700550 / JCM 31522 / CIP 106686 / LMG 19005 / NCIMB 14063 / MR-1).